Reading from the N-terminus, the 317-residue chain is Beta-ketoacyl-[acyl-carrier-protein] synthase III (317 aa).

Residues Cys112 and His244 contribute to the active site. The tract at residues 245–249 (QANLR) is ACP-binding. Asn274 is a catalytic residue.

Belongs to the thiolase-like superfamily. FabH family. As to quaternary structure, homodimer.

It is found in the cytoplasm. The catalysed reaction is malonyl-[ACP] + acetyl-CoA + H(+) = 3-oxobutanoyl-[ACP] + CO2 + CoA. Its pathway is lipid metabolism; fatty acid biosynthesis. Functionally, catalyzes the condensation reaction of fatty acid synthesis by the addition to an acyl acceptor of two carbons from malonyl-ACP. Catalyzes the first condensation reaction which initiates fatty acid synthesis and may therefore play a role in governing the total rate of fatty acid production. Possesses both acetoacetyl-ACP synthase and acetyl transacylase activities. Its substrate specificity determines the biosynthesis of branched-chain and/or straight-chain of fatty acids. This chain is Beta-ketoacyl-[acyl-carrier-protein] synthase III, found in Enterobacter sp. (strain 638).